A 531-amino-acid chain; its full sequence is UDP-glucuronosyltransferase 2B13 (531 aa).

Residues 1 to 24 (MPVKCISVLLLLLQLSCCFSSGSC) form the signal peptide. 3 N-linked (GlcNAc...) asparagine glycosylation sites follow: Asn-69, Asn-101, and Asn-317. The chain crosses the membrane as a helical span at residues 495-511 (VIGFLLACVAITTYLIV).

It belongs to the UDP-glycosyltransferase family.

The protein resides in the microsome membrane. The protein localises to the endoplasmic reticulum membrane. The catalysed reaction is glucuronate acceptor + UDP-alpha-D-glucuronate = acceptor beta-D-glucuronoside + UDP + H(+). In terms of biological role, UDPGT is of major importance in the conjugation and subsequent elimination of potentially toxic xenobiotics and endogenous compounds. Acts on small phenolic agents such as 2-beta-naphthol and 4-methylumbelliferone as well as bulky phenolic compounds like 2-hydroxy- and 4-hydroxybiphenyl. In contrast to 2B16 it is active toward octylgallate. The protein is UDP-glucuronosyltransferase 2B13 (UGT2B13) of Oryctolagus cuniculus (Rabbit).